Reading from the N-terminus, the 147-residue chain is MNLKKYTDYALRVLIFTGLKSDQELANIKEIAEVYQISQEHLRKVVHELTKMELVVTIRGRNGGIKLAKPASEINIGLLIRQLENDFVLLECFDKGTNHCVISPGCTLKHVINKALVAFFKVLEEYTLEDLIKNEEELLALMGIEKV.

An HTH rrf2-type domain is found at 2–133 (NLKKYTDYAL…EEYTLEDLIK (132 aa)). The H-T-H motif DNA-binding region spans 28 to 51 (IKEIAEVYQISQEHLRKVVHELTK). Positions 92, 100, and 106 each coordinate [2Fe-2S] cluster.

It depends on [2Fe-2S] cluster as a cofactor.

Nitric oxide-responsive transcriptional regulator. This chain is HTH-type transcriptional regulator NsrR (nsrR), found in Oceanobacillus iheyensis (strain DSM 14371 / CIP 107618 / JCM 11309 / KCTC 3954 / HTE831).